The sequence spans 386 residues: Vesicle-associated protein 2-2 (386 aa).

Position 1 is an N-acetylmethionine (methionine 1). At 1–363 (MNMPLLDIQP…TKKIVKEVHN (363 aa)) the chain is on the cytoplasmic side. Residues 5–125 (LLDIQPRTLQ…EENKLRVTLV (121 aa)) form the MSP domain. Serine 279 is subject to Phosphoserine. The stretch at 300–353 (ELKLVKDIEEMKLKVDALESKLKQADSTISKLMEERSISSQHRQSLQHELAELR) forms a coiled coil. Residues 364–384 (GFPLLYVCVVAFIAYVIGHFL) traverse the membrane as a helical; Anchor for type IV membrane protein segment.

Belongs to the VAMP-associated protein (VAP) (TC 9.B.17) family. As to quaternary structure, interacts with cowpea mosaic virus (CPMV) NTP-binding protein (NTB).

The protein resides in the endoplasmic reticulum membrane. Functionally, may play a role in vesicle trafficking. This chain is Vesicle-associated protein 2-2 (PVA22), found in Arabidopsis thaliana (Mouse-ear cress).